We begin with the raw amino-acid sequence, 98 residues long: Homeobox protein Ht-En (98 aa).

The homeobox DNA-binding region spans 3–62 (EKRPRTAFTGDQLARLKREFSENKYLTEQRRTCLAKELNLNESQIKIWFQNKRAKMKKAS). Positions 79–98 (NHSSSSSSSSSSSSSIFLLA) are disordered. Residues 81-98 (SSSSSSSSSSSSSIFLLA) are compositionally biased toward low complexity.

The protein belongs to the engrailed homeobox family. Phosphorylated in the Ser-rich domain.

It localises to the nucleus. Functionally, this protein specifies the body segmentation pattern. In Helobdella triserialis (Leech), this protein is Homeobox protein Ht-En (HT-EN).